Consider the following 296-residue polypeptide: Light-independent protochlorophyllide reductase iron-sulfur ATP-binding protein (296 aa).

ATP-binding positions include 39 to 44 and Lys-68; that span reads GIGKST. Ser-43 provides a ligand contact to Mg(2+). [4Fe-4S] cluster contacts are provided by Cys-124 and Cys-158. Residue 209 to 210 participates in ATP binding; sequence NR.

The protein belongs to the NifH/BchL/ChlL family. In terms of assembly, homodimer. Protochlorophyllide reductase is composed of three subunits; ChlL, ChlN and ChlB. It depends on [4Fe-4S] cluster as a cofactor.

The enzyme catalyses chlorophyllide a + oxidized 2[4Fe-4S]-[ferredoxin] + 2 ADP + 2 phosphate = protochlorophyllide a + reduced 2[4Fe-4S]-[ferredoxin] + 2 ATP + 2 H2O. The protein operates within porphyrin-containing compound metabolism; chlorophyll biosynthesis (light-independent). Functionally, component of the dark-operative protochlorophyllide reductase (DPOR) that uses Mg-ATP and reduced ferredoxin to reduce ring D of protochlorophyllide (Pchlide) to form chlorophyllide a (Chlide). This reaction is light-independent. The L component serves as a unique electron donor to the NB-component of the complex, and binds Mg-ATP. This is Light-independent protochlorophyllide reductase iron-sulfur ATP-binding protein from Prochlorococcus marinus (strain SARG / CCMP1375 / SS120).